Here is a 197-residue protein sequence, read N- to C-terminus: Holliday junction branch migration complex subunit RuvA (197 aa).

Positions 1-64 (MYEYIKGKYI…EDFIGVYGFL (64 aa)) are domain I. The domain II stretch occupies residues 65–144 (TKDELSMFKL…DILEEDDEQI (80 aa)). A flexible linker region spans residues 145–149 (INKVA). The tract at residues 149–197 (ADDKKVLEAVAALVTLGYSEKEANKVINSCDKNNSLEQIIKEALKYLMK) is domain III.

Belongs to the RuvA family. In terms of assembly, homotetramer. Forms an RuvA(8)-RuvB(12)-Holliday junction (HJ) complex. HJ DNA is sandwiched between 2 RuvA tetramers; dsDNA enters through RuvA and exits via RuvB. An RuvB hexamer assembles on each DNA strand where it exits the tetramer. Each RuvB hexamer is contacted by two RuvA subunits (via domain III) on 2 adjacent RuvB subunits; this complex drives branch migration. In the full resolvosome a probable DNA-RuvA(4)-RuvB(12)-RuvC(2) complex forms which resolves the HJ.

It is found in the cytoplasm. In terms of biological role, the RuvA-RuvB-RuvC complex processes Holliday junction (HJ) DNA during genetic recombination and DNA repair, while the RuvA-RuvB complex plays an important role in the rescue of blocked DNA replication forks via replication fork reversal (RFR). RuvA specifically binds to HJ cruciform DNA, conferring on it an open structure. The RuvB hexamer acts as an ATP-dependent pump, pulling dsDNA into and through the RuvAB complex. HJ branch migration allows RuvC to scan DNA until it finds its consensus sequence, where it cleaves and resolves the cruciform DNA. In Clostridium botulinum (strain ATCC 19397 / Type A), this protein is Holliday junction branch migration complex subunit RuvA.